A 287-amino-acid chain; its full sequence is Octanoyl-[GcvH]:protein N-octanoyltransferase (287 aa).

In terms of domain architecture, BPL/LPL catalytic spans 45–253 (GESPATARSW…ELKELSGRLY (209 aa)). Cys150 acts as the Acyl-thioester intermediate in catalysis.

Belongs to the octanoyltransferase LipL family.

It carries out the reaction N(6)-octanoyl-L-lysyl-[glycine-cleavage complex H protein] + L-lysyl-[lipoyl-carrier protein] = N(6)-octanoyl-L-lysyl-[lipoyl-carrier protein] + L-lysyl-[glycine-cleavage complex H protein]. It participates in protein modification; protein lipoylation via endogenous pathway; protein N(6)-(lipoyl)lysine from octanoyl-[acyl-carrier-protein]. Its function is as follows. Catalyzes the amidotransfer (transamidation) of the octanoyl moiety from octanoyl-GcvH to the lipoyl domain of the E2 subunit of lipoate-dependent enzymes. The chain is Octanoyl-[GcvH]:protein N-octanoyltransferase from Bacillus velezensis (strain DSM 23117 / BGSC 10A6 / LMG 26770 / FZB42) (Bacillus amyloliquefaciens subsp. plantarum).